Here is a 1193-residue protein sequence, read N- to C-terminus: Magnesium-chelatase subunit H (1193 aa).

Belongs to the Mg-chelatase subunit H family.

It carries out the reaction protoporphyrin IX + Mg(2+) + ATP + H2O = Mg-protoporphyrin IX + ADP + phosphate + 3 H(+). It participates in porphyrin-containing compound metabolism; bacteriochlorophyll biosynthesis (light-independent). Its function is as follows. Involved in bacteriochlorophyll pigment biosynthesis; introduces a magnesium ion into protoporphyrin IX to yield Mg-protoroporphyrin IX. The sequence is that of Magnesium-chelatase subunit H (bchH) from Cereibacter sphaeroides (strain ATCC 17023 / DSM 158 / JCM 6121 / CCUG 31486 / LMG 2827 / NBRC 12203 / NCIMB 8253 / ATH 2.4.1.) (Rhodobacter sphaeroides).